We begin with the raw amino-acid sequence, 507 residues long: Arabinose import ATP-binding protein AraG (507 aa).

ABC transporter domains lie at 14 to 249 (LRFN…MVGR) and 249 to 505 (RDIQ…LPRT). 46-53 (GENGAGKS) contacts ATP.

It belongs to the ABC transporter superfamily. Arabinose importer (TC 3.A.1.2.2) family. In terms of assembly, the complex is composed of two ATP-binding proteins (AraG), two transmembrane proteins (AraH) and a solute-binding protein (AraF).

Its subcellular location is the cell inner membrane. It catalyses the reaction L-arabinose(out) + ATP + H2O = L-arabinose(in) + ADP + phosphate + H(+). Its function is as follows. Part of the ABC transporter complex AraFGH involved in arabinose import. Responsible for energy coupling to the transport system. The protein is Arabinose import ATP-binding protein AraG of Pseudomonas savastanoi pv. phaseolicola (strain 1448A / Race 6) (Pseudomonas syringae pv. phaseolicola (strain 1448A / Race 6)).